The primary structure comprises 383 residues: Protein pelota homolog (383 aa).

Belongs to the eukaryotic release factor 1 family. Pelota subfamily. In terms of assembly, component of the Pelota-HBS1L complex, also named Dom34-Hbs1 complex, composed of PELO and HBS1L. The cofactor is a divalent metal cation.

It is found in the cytoplasm. Its function is as follows. Component of the Pelota-HBS1L complex, a complex that recognizes stalled ribosomes and triggers the No-Go Decay (NGD) pathway. In the Pelota-HBS1L complex, PELO recognizes ribosomes stalled at the 3' end of an mRNA and engages stalled ribosomes by destabilizing mRNA in the mRNA channel. Following mRNA extraction from stalled ribosomes by the SKI complex, the Pelota-HBS1L complex promotes recruitment of ABCE1, which drives the disassembly of stalled ribosomes, followed by degradation of damaged mRNAs as part of the NGD pathway. This chain is Protein pelota homolog (pelo), found in Xenopus laevis (African clawed frog).